Reading from the N-terminus, the 172-residue chain is Large ribosomal subunit protein bL17m (172 aa).

Residues methionine 1–alanine 8 constitute a mitochondrion transit peptide.

The protein belongs to the bacterial ribosomal protein bL17 family. As to quaternary structure, component of the mitochondrial ribosome large subunit (39S) which comprises a 16S rRNA and about 50 distinct proteins.

The protein localises to the mitochondrion. This is Large ribosomal subunit protein bL17m (MRPL17) from Bos taurus (Bovine).